The sequence spans 179 residues: NADH-quinone oxidoreductase subunit I (179 aa).

2 consecutive 4Fe-4S ferredoxin-type domains span residues 49–79 (LTRDPDGEERCVACNLCAVACPVACISLQKG) and 89–118 (EFFRINFSRCIFCGLCEEACPTSAIQLTPD). The [4Fe-4S] cluster site is built by C59, C62, C65, C69, C98, C101, C104, and C108.

The protein belongs to the complex I 23 kDa subunit family. As to quaternary structure, NDH-1 is composed of 14 different subunits. Subunits NuoA, H, J, K, L, M, N constitute the membrane sector of the complex. [4Fe-4S] cluster is required as a cofactor.

The protein resides in the cell inner membrane. The enzyme catalyses a quinone + NADH + 5 H(+)(in) = a quinol + NAD(+) + 4 H(+)(out). Functionally, NDH-1 shuttles electrons from NADH, via FMN and iron-sulfur (Fe-S) centers, to quinones in the respiratory chain. The immediate electron acceptor for the enzyme in this species is believed to be ubiquinone. Couples the redox reaction to proton translocation (for every two electrons transferred, four hydrogen ions are translocated across the cytoplasmic membrane), and thus conserves the redox energy in a proton gradient. This is NADH-quinone oxidoreductase subunit I from Chromohalobacter salexigens (strain ATCC BAA-138 / DSM 3043 / CIP 106854 / NCIMB 13768 / 1H11).